Reading from the N-terminus, the 263-residue chain is Kallikrein 1-related peptidase b24 (263 aa).

The signal sequence occupies residues 1–17; sequence MWFLILFLALSLGGIDA. The propeptide at 18-24 is activation peptide; sequence APPVQSR. Residues 25-260 form the Peptidase S1 domain; that stretch reads VVGGFKCEKN…FASWIKDTMA (236 aa). 5 disulfide bridges follow: Cys31–Cys175, Cys50–Cys66, Cys154–Cys221, Cys186–Cys200, and Cys211–Cys236. His65 acts as the Charge relay system in catalysis. N-linked (GlcNAc...) asparagine glycans are attached at residues Asn69 and Asn105. The active-site Charge relay system is Asp122. An N-linked (GlcNAc...) asparagine glycan is attached at Asn185. Ser215 serves as the catalytic Charge relay system.

The protein belongs to the peptidase S1 family. Kallikrein subfamily.

The enzyme catalyses Preferential cleavage of Arg-|-Xaa bonds in small molecule substrates. Highly selective action to release kallidin (lysyl-bradykinin) from kininogen involves hydrolysis of Met-|-Xaa or Leu-|-Xaa.. In terms of biological role, glandular kallikreins cleave Met-Lys and Arg-Ser bonds in kininogen to release Lys-bradykinin. This is Kallikrein 1-related peptidase b24 (Klk1b24) from Mus musculus (Mouse).